Reading from the N-terminus, the 142-residue chain is Large ribosomal subunit protein uL13 (142 aa).

This sequence belongs to the universal ribosomal protein uL13 family. As to quaternary structure, part of the 50S ribosomal subunit.

In terms of biological role, this protein is one of the early assembly proteins of the 50S ribosomal subunit, although it is not seen to bind rRNA by itself. It is important during the early stages of 50S assembly. This chain is Large ribosomal subunit protein uL13, found in Sodalis glossinidius (strain morsitans).